The chain runs to 1188 residues: DNA-directed RNA polymerase subunit beta (1188 aa).

The disordered stretch occupies residues Glu1149–Lys1188. Positions Val1161–Ala1175 are enriched in basic and acidic residues.

It belongs to the RNA polymerase beta chain family. In terms of assembly, the RNAP catalytic core consists of 2 alpha, 1 beta, 1 beta' and 1 omega subunit. When a sigma factor is associated with the core the holoenzyme is formed, which can initiate transcription.

It carries out the reaction RNA(n) + a ribonucleoside 5'-triphosphate = RNA(n+1) + diphosphate. In terms of biological role, DNA-dependent RNA polymerase catalyzes the transcription of DNA into RNA using the four ribonucleoside triphosphates as substrates. The polypeptide is DNA-directed RNA polymerase subunit beta (Streptococcus uberis (strain ATCC BAA-854 / 0140J)).